The sequence spans 315 residues: Cytochrome f (315 aa).

An N-terminal signal peptide occupies residues 1 to 30; sequence MRTFLKFSTLVSKGVLVLVCSFFLTASSNA. Heme-binding residues include Tyr-31, Cys-51, Cys-54, and His-55. The chain crosses the membrane as a helical span at residues 281–300; it reads IQGLLVFFLFVLLAQVFLVL.

This sequence belongs to the cytochrome f family. As to quaternary structure, the 4 large subunits of the cytochrome b6-f complex are cytochrome b6, subunit IV (17 kDa polypeptide, petD), cytochrome f and the Rieske protein, while the 4 small subunits are PetG, PetL, PetM and PetN. The complex functions as a dimer. Heme is required as a cofactor.

It localises to the plastid. It is found in the chloroplast thylakoid membrane. Its function is as follows. Component of the cytochrome b6-f complex, which mediates electron transfer between photosystem II (PSII) and photosystem I (PSI), cyclic electron flow around PSI, and state transitions. The sequence is that of Cytochrome f (petA) from Chlorella vulgaris (Green alga).